Here is a 71-residue protein sequence, read N- to C-terminus: uncharacterized protein (71 aa).

A helical transmembrane segment spans residues 12–34 (YLYNYFSSTTSWLVFIILSLDTI).

The protein localises to the membrane. This is an uncharacterized protein from Schizosaccharomyces pombe (strain 972 / ATCC 24843) (Fission yeast).